We begin with the raw amino-acid sequence, 237 residues long: Phosphoribosylaminoimidazole-succinocarboxamide synthase (237 aa).

The protein belongs to the SAICAR synthetase family.

The enzyme catalyses 5-amino-1-(5-phospho-D-ribosyl)imidazole-4-carboxylate + L-aspartate + ATP = (2S)-2-[5-amino-1-(5-phospho-beta-D-ribosyl)imidazole-4-carboxamido]succinate + ADP + phosphate + 2 H(+). Its pathway is purine metabolism; IMP biosynthesis via de novo pathway; 5-amino-1-(5-phospho-D-ribosyl)imidazole-4-carboxamide from 5-amino-1-(5-phospho-D-ribosyl)imidazole-4-carboxylate: step 1/2. The protein is Phosphoribosylaminoimidazole-succinocarboxamide synthase of Deinococcus deserti (strain DSM 17065 / CIP 109153 / LMG 22923 / VCD115).